Reading from the N-terminus, the 103-residue chain is Large ribosomal subunit protein uL24 (103 aa).

This sequence belongs to the universal ribosomal protein uL24 family. Part of the 50S ribosomal subunit.

One of two assembly initiator proteins, it binds directly to the 5'-end of the 23S rRNA, where it nucleates assembly of the 50S subunit. Its function is as follows. One of the proteins that surrounds the polypeptide exit tunnel on the outside of the subunit. This chain is Large ribosomal subunit protein uL24, found in Synechococcus sp. (strain CC9311).